Here is an 81-residue protein sequence, read N- to C-terminus: MNPTVAAASVIAAALAVGLAAIGPGFGQGNASGEAVSGIARQPEAEGKIRGTLLLSLAFMESLTIYGLVIALVLLFANPFA.

2 helical membrane passes run 6-26 and 57-77; these read AAASVIAAALAVGLAAIGPGF and LAFMESLTIYGLVIALVLLFA.

This sequence belongs to the ATPase C chain family. F-type ATPases have 2 components, F(1) - the catalytic core - and F(0) - the membrane proton channel. F(1) has five subunits: alpha(3), beta(3), gamma(1), delta(1), epsilon(1). F(0) has four main subunits: a(1), b(1), b'(1) and c(10-14). The alpha and beta chains form an alternating ring which encloses part of the gamma chain. F(1) is attached to F(0) by a central stalk formed by the gamma and epsilon chains, while a peripheral stalk is formed by the delta, b and b' chains.

Its subcellular location is the cellular thylakoid membrane. Functionally, f(1)F(0) ATP synthase produces ATP from ADP in the presence of a proton or sodium gradient. F-type ATPases consist of two structural domains, F(1) containing the extramembraneous catalytic core and F(0) containing the membrane proton channel, linked together by a central stalk and a peripheral stalk. During catalysis, ATP synthesis in the catalytic domain of F(1) is coupled via a rotary mechanism of the central stalk subunits to proton translocation. Key component of the F(0) channel; it plays a direct role in translocation across the membrane. A homomeric c-ring of between 10-14 subunits forms the central stalk rotor element with the F(1) delta and epsilon subunits. In Rippkaea orientalis (strain PCC 8801 / RF-1) (Cyanothece sp. (strain PCC 8801)), this protein is ATP synthase subunit c.